Consider the following 700-residue polypeptide: ABC transporter B family member 26, chloroplastic (700 aa).

Residues 1-59 (MAQQVLGCTSRPIRVSLHRCSVITTSDTIRRKNLRFVRNPRLSFSLQSSTRNYRLPSIN) constitute a chloroplast transit peptide. 3 helical membrane-spanning segments follow: residues 137 to 157 (WVIFAAFSTLIVAALSEITIP), 182 to 202 (LVTLCVTSGICSGIRGCFFGI), and 268 to 288 (LIYLLILSWPLGLCTLVICCI). In terms of domain architecture, ABC transmembrane type-1 spans 139–421 (IFAAFSTLIV…VGDNLSSLMQ (283 aa)). The region spanning 455–694 (IEFVDVSFSY…DGLYARLTKR (240 aa)) is the ABC transporter domain. Residue 490–497 (GLSGSGKS) coordinates ATP.

It belongs to the ABC transporter superfamily. ABCB family. Multidrug resistance exporter (TC 3.A.1.201) subfamily.

Its subcellular location is the plastid. It localises to the chloroplast membrane. The protein is ABC transporter B family member 26, chloroplastic (ABCB26) of Arabidopsis thaliana (Mouse-ear cress).